Here is a 127-residue protein sequence, read N- to C-terminus: Mitochondrial pyruvate carrier 2 (127 aa).

The Mitochondrial matrix portion of the chain corresponds to 2–40; it reads SAAGARGLRATYHRLLDKVELMLPEKLRPLYNHPAGPRT. The chain crosses the membrane as a helical span at residues 41–61; the sequence is VFFWAPIMKWGLVCAGLADMA. The Mitochondrial intermembrane segment spans residues 62-72; the sequence is RPAEKLSTAQS. Residues 73–90 traverse the membrane as a helical segment; the sequence is AVLMATGFIWSRYSLVII. The Mitochondrial matrix portion of the chain corresponds to 91-95; sequence PKNWS. Residues 96–115 traverse the membrane as a helical segment; it reads LFAVNFFVGAAGASQLFRIW. Over 116 to 127 the chain is Mitochondrial intermembrane; that stretch reads RYNQELKAKAHK.

Belongs to the mitochondrial pyruvate carrier (MPC) (TC 2.A.105) family. As to quaternary structure, homodimer. Homooligomer. Forms heterodimers with MPC1 and MPC1L. The heterodimer is the more stable and dominant form.

It is found in the mitochondrion inner membrane. It carries out the reaction pyruvate(out) + H(+)(out) = pyruvate(in) + H(+)(in). Mediates the uptake of pyruvate into mitochondria. This is Mitochondrial pyruvate carrier 2 (MPC2) from Homo sapiens (Human).